The following is a 76-amino-acid chain: Cyclin-dependent kinases regulatory subunit (76 aa).

The protein belongs to the CKS family. As to quaternary structure, forms a homohexamer that can probably bind six kinase subunits.

In terms of biological role, binds to the catalytic subunit of the cyclin dependent kinases and is essential for their biological function. This is Cyclin-dependent kinases regulatory subunit from Patella vulgata (Common limpet).